The sequence spans 202 residues: Small ribosomal subunit protein uS5 (202 aa).

The segment covering 1 to 13 (MPGQQRRGGGSGG) has biased composition (gly residues). A disordered region spans residues 1-31 (MPGQQRRGGGSGGSDRRERRDRSGGGPAQEK). The span at 14–23 (SDRRERRDRS) shows a compositional bias: basic and acidic residues. Positions 34-97 (YVERVVAINR…EEAKKHFFKV (64 aa)) constitute an S5 DRBM domain.

Belongs to the universal ribosomal protein uS5 family. In terms of assembly, part of the 30S ribosomal subunit. Contacts proteins S4 and S8.

In terms of biological role, with S4 and S12 plays an important role in translational accuracy. Its function is as follows. Located at the back of the 30S subunit body where it stabilizes the conformation of the head with respect to the body. The polypeptide is Small ribosomal subunit protein uS5 (Parafrankia sp. (strain EAN1pec)).